A 1183-amino-acid polypeptide reads, in one-letter code: RecQ-like DNA helicase BLM (1183 aa).

The interval 1-109 (MEEARAATNG…AAEQDSSAEH (109 aa)) is disordered. Over residues 14-27 (ESQKLSNGEKSSQL) the composition is skewed to polar residues. A compositionally biased stretch (acidic residues) spans 38 to 48 (ADIELEEDDYL). The tract at residues 110–162 (ADKGLHLEQQLYSVMEDICKLVDAIPLHELTSISCAKELLQQRELRRKLLADS) is necessary for dimerization and homooligomerization. Disordered regions lie at residues 164–215 (ALNT…LPSV), 260–323 (PKVN…GCWD), and 381–408 (GSAP…PLVH). Polar residues-rich tracts occupy residues 206–215 (TPKSTNLPSV) and 265–280 (KGST…SFNG). Residues 439-443 (FRTNQ) and 463-467 (GGGKS) contribute to the ATP site. The region spanning 447 to 622 (INAALLGEDC…QNQLEMLKPQ (176 aa)) is the Helicase ATP-binding domain. The DEAH box motif lies at 566 to 569 (DEAH). 3' overhang DNA-binding stretches follow at residues 641-644 (KPKK) and 668-670 (SRH). The 148-residue stretch at 648 to 795 (DCLEWIKKYH…TRQTHFNNLY (148 aa)) folds into the Helicase C-terminal domain. Arginine 753 contacts ATP. The segment at 771 to 774 (RLRR) is 3' overhang DNA-binding. Residues cysteine 807, cysteine 826, cysteine 834, and cysteine 837 each coordinate Zn(2+). Residues 865–910 (QVGGINGNRNTGSGRYTLNMMVDIFLGAKSAKIQSGIFGKGAAYSR) are DNA Holliday junction binding. 3' overhang DNA-binding regions lie at residues 881–883 (TLN), 892–896 (AKSAK), and 931–937 (YITANDQ). One can recognise an HRDC domain in the interval 983 to 1063 (EEMVKKCLGE…DKYSEWTTPE (81 aa)). A necessary for ssDNA and DNA Holliday junction binding region spans residues 998–1015 (KTLGKIFDVHYFNIFSTS). The segment at 1068-1183 (QSVDTAPGSA…HFLQPSYAVL (116 aa)) is disordered. Positions 1091–1101 (VTSSYFGGNAN) are enriched in polar residues. Residues 1104-1120 (RKRKRLPNSGESKRKKT) carry the Nuclear localization signal motif. Basic residues predominate over residues 1133–1142 (ARYRRARRAP). The segment covering 1143-1158 (GSRAAAPAQSSALRGA) has biased composition (low complexity).

This sequence belongs to the helicase family. RecQ subfamily. Monomer. Homodimer (via N-terminus). Homotetramer (via N-terminus); dimer of dimers. Homohexamer (via N-terminus). Self-association negatively regulates DNA unwinding amplitude and rate. Oligomer complexes dissociate into monomer in presence of ATP. It depends on Zn(2+) as a cofactor.

The protein localises to the nucleus. It carries out the reaction Couples ATP hydrolysis with the unwinding of duplex DNA by translocating in the 3'-5' direction.. The catalysed reaction is ATP + H2O = ADP + phosphate + H(+). Its function is as follows. ATP-dependent DNA helicase that unwinds single- and double-stranded DNA in a 3'-5' direction. Participates in DNA replication and repair. Involved in 5'-end resection of DNA during double-strand break (DSB) repair. Negatively regulates sister chromatid exchange (SCE). Stimulates DNA 4-way junction branch migration and DNA Holliday junction dissolution. Binds DNA. Binds single-stranded DNA (ssDNA), forked duplex DNA and DNA Holliday junction. The polypeptide is RecQ-like DNA helicase BLM (BLM) (Gallus gallus (Chicken)).